The sequence spans 512 residues: MQLNSNEISELIRERIVNFNLESEARNEGTIVSVSDGIITIHGLADVMQGEMLELPNNRFALALNLERHSVGAVVMGPYADLSEGMKVKGTGRILEVPVGNGLLGRVVNTLGQPIDGKGAVSFDRMDPVEVIAPGVIDRKSVDQPIQTGYKAVDSMVPIGRGQRELIIGDRQTGKTAMAIDAIINQKELGVKCIYVAIGQKASTIANVVRKLEEHGALENTIVVVASASEAAALQYLAPYAGCTMGEYFRDRGEDALIVYDDLSKQAVAYRQISLLLKRPPGREAFPGDVFYLHSRLLERAARVNEEYVERFTNGEVKGKTGSLTALPIIETQAGDVSAFVPTNVISITDGQIFLQTQLFNSGLRPAVDPGISVSRVGGAAQTKVIKKLSGGIRTALAQYRELAAFAQFSSDLDEATRRQLDHGEKVTELMKQKQYAPMTVAEQALAIFAAEKGYLTDVALNQISRFEEELMAFGRTNAQPLLDKINQSGDYNDEIESELHSLLKEFTALQS.

169 to 176 lines the ATP pocket; that stretch reads GDRQTGKT.

The protein belongs to the ATPase alpha/beta chains family. In terms of assembly, F-type ATPases have 2 components, CF(1) - the catalytic core - and CF(0) - the membrane proton channel. CF(1) has five subunits: alpha(3), beta(3), gamma(1), delta(1), epsilon(1). CF(0) has three main subunits: a(1), b(2) and c(9-12). The alpha and beta chains form an alternating ring which encloses part of the gamma chain. CF(1) is attached to CF(0) by a central stalk formed by the gamma and epsilon chains, while a peripheral stalk is formed by the delta and b chains.

The protein localises to the cell inner membrane. It catalyses the reaction ATP + H2O + 4 H(+)(in) = ADP + phosphate + 5 H(+)(out). Functionally, produces ATP from ADP in the presence of a proton gradient across the membrane. The alpha chain is a regulatory subunit. This chain is ATP synthase subunit alpha 2, found in Vibrio campbellii (strain ATCC BAA-1116).